A 117-amino-acid polypeptide reads, in one-letter code: Aspartate 1-decarboxylase (117 aa).

Catalysis depends on Ser25, which acts as the Schiff-base intermediate with substrate; via pyruvic acid. Ser25 bears the Pyruvic acid (Ser) mark. Position 57 (Thr57) interacts with substrate. Residue Tyr58 is the Proton donor of the active site. 73–75 (GAA) provides a ligand contact to substrate.

The protein belongs to the PanD family. In terms of assembly, heterooctamer of four alpha and four beta subunits. It depends on pyruvate as a cofactor. Is synthesized initially as an inactive proenzyme, which is activated by self-cleavage at a specific serine bond to produce a beta-subunit with a hydroxyl group at its C-terminus and an alpha-subunit with a pyruvoyl group at its N-terminus.

The protein localises to the cytoplasm. It catalyses the reaction L-aspartate + H(+) = beta-alanine + CO2. The protein operates within cofactor biosynthesis; (R)-pantothenate biosynthesis; beta-alanine from L-aspartate: step 1/1. In terms of biological role, catalyzes the pyruvoyl-dependent decarboxylation of aspartate to produce beta-alanine. The protein is Aspartate 1-decarboxylase of Bacteroides thetaiotaomicron (strain ATCC 29148 / DSM 2079 / JCM 5827 / CCUG 10774 / NCTC 10582 / VPI-5482 / E50).